The primary structure comprises 148 residues: Deoxyuridine 5'-triphosphate nucleotidohydrolase (148 aa).

Residues 67–69 (RSG), Asn-80, 84–86 (LID), and Met-94 contribute to the substrate site.

It belongs to the dUTPase family. Mg(2+) is required as a cofactor.

The enzyme catalyses dUTP + H2O = dUMP + diphosphate + H(+). It functions in the pathway pyrimidine metabolism; dUMP biosynthesis; dUMP from dCTP (dUTP route): step 2/2. Functionally, this enzyme is involved in nucleotide metabolism: it produces dUMP, the immediate precursor of thymidine nucleotides and it decreases the intracellular concentration of dUTP so that uracil cannot be incorporated into DNA. The sequence is that of Deoxyuridine 5'-triphosphate nucleotidohydrolase from Francisella tularensis subsp. tularensis (strain FSC 198).